Here is an 88-residue protein sequence, read N- to C-terminus: Putative carnobacteriocin-BM1 immunity protein (88 aa).

Functionally, could impart immunity to carnobacteriocin-BM1 to naturally sensitive host strains. The chain is Putative carnobacteriocin-BM1 immunity protein from Carnobacterium maltaromaticum (Carnobacterium piscicola).